Consider the following 437-residue polypeptide: Elongation factor 1-gamma-B (437 aa).

The GST N-terminal domain occupies 2–87 (AGGTLYTYPD…YVANDELRGS (86 aa)). Positions 89–222 (NRLHQAQVIQ…KMAQFDAKKF (134 aa)) constitute a GST C-terminal domain. The span at 225–240 (VQPKKETPKKEKPAKE) shows a compositional bias: basic and acidic residues. Residues 225–279 (VQPKKETPKKEKPAKEPKKKKKKKKKATPAPAPAPEDDLDESEKALAAEPKSKDP) form a disordered region. Basic residues predominate over residues 241-251 (PKKKKKKKKKA). The segment covering 266-279 (SEKALAAEPKSKDP) has biased composition (basic and acidic residues). Residues 276–437 (SKDPYAHLPK…KAFNQGKIFK (162 aa)) enclose the EF-1-gamma C-terminal domain.

EF-1 is composed of four subunits: alpha, beta, delta, and gamma.

Functionally, probably plays a role in anchoring the complex to other cellular components. The polypeptide is Elongation factor 1-gamma-B (eef1g-b) (Xenopus laevis (African clawed frog)).